Reading from the N-terminus, the 396-residue chain is Elongation factor Tu 2 (396 aa).

The 197-residue stretch at 10–206 folds into the tr-type G domain; the sequence is KPHVNVGTIG…TLDTYIPEPE (197 aa). Residues 19–26 are G1; the sequence is GHVDHGKT. GTP is bound at residue 19–26; that stretch reads GHVDHGKT. Threonine 26 lines the Mg(2+) pocket. The tract at residues 60–64 is G2; sequence GITIN. Residues 81–84 are G3; it reads DCPG. GTP contacts are provided by residues 81 to 85 and 136 to 139; these read DCPGH and NKCD. A G4 region spans residues 136–139; the sequence is NKCD. Positions 174-176 are G5; the sequence is SAL.

It belongs to the TRAFAC class translation factor GTPase superfamily. Classic translation factor GTPase family. EF-Tu/EF-1A subfamily. In terms of assembly, monomer.

It localises to the cytoplasm. It carries out the reaction GTP + H2O = GDP + phosphate + H(+). GTP hydrolase that promotes the GTP-dependent binding of aminoacyl-tRNA to the A-site of ribosomes during protein biosynthesis. In Psychrobacter sp. (strain PRwf-1), this protein is Elongation factor Tu 2.